We begin with the raw amino-acid sequence, 140 residues long: Ribosome maturation factor RimP (140 aa).

Belongs to the RimP family.

It is found in the cytoplasm. Required for maturation of 30S ribosomal subunits. The sequence is that of Ribosome maturation factor RimP from Campylobacter jejuni subsp. doylei (strain ATCC BAA-1458 / RM4099 / 269.97).